Here is a 333-residue protein sequence, read N- to C-terminus: Foldase protein PrsA (333 aa).

The N-terminal stretch at 1 to 22 (MKKSTKLLAGIVTLASAMTLAA) is a signal peptide. A lipid anchor (N-palmitoyl cysteine) is attached at C23. The S-diacylglycerol cysteine moiety is linked to residue C23. The 96-residue stretch at 145 to 240 (TPEMTTQVIT…NKFYIVKVTK (96 aa)) folds into the PpiC domain. The interval 301 to 333 (DKKASKANTSKSDQKTSSDSSKDSQSSKSKSEK) is disordered. Positions 312-322 (SDQKTSSDSSK) are enriched in basic and acidic residues. Residues 323–333 (DSQSSKSKSEK) are compositionally biased toward low complexity.

The protein belongs to the PrsA family.

It is found in the cell membrane. The enzyme catalyses [protein]-peptidylproline (omega=180) = [protein]-peptidylproline (omega=0). Functionally, plays a major role in protein secretion by helping the post-translocational extracellular folding of several secreted proteins. This is Foldase protein PrsA from Streptococcus equi subsp. zooepidemicus (strain MGCS10565).